We begin with the raw amino-acid sequence, 758 residues long: DNA ligase (758 aa).

The interval 1–28 (MPENFGAMRQDGLVSTSESDSPAPAATP) is disordered. NAD(+) contacts are provided by residues 60–64 (DAEFD), 109–110 (SL), and Glu-148. Lys-150 acts as the N6-AMP-lysine intermediate in catalysis. The NAD(+) site is built by Arg-171, Glu-208, Lys-324, and Lys-348. The Zn(2+) site is built by Cys-442, Cys-445, Cys-461, and Cys-467. One can recognise a BRCT domain in the interval 660–749 (SVRRTLAGLT…PDHSAEAEEN (90 aa)). The interval 735–758 (LLAHGPDHSAEAEENESEGSTTND) is disordered.

It belongs to the NAD-dependent DNA ligase family. LigA subfamily. Requires Mg(2+) as cofactor. It depends on Mn(2+) as a cofactor.

It catalyses the reaction NAD(+) + (deoxyribonucleotide)n-3'-hydroxyl + 5'-phospho-(deoxyribonucleotide)m = (deoxyribonucleotide)n+m + AMP + beta-nicotinamide D-nucleotide.. DNA ligase that catalyzes the formation of phosphodiester linkages between 5'-phosphoryl and 3'-hydroxyl groups in double-stranded DNA using NAD as a coenzyme and as the energy source for the reaction. It is essential for DNA replication and repair of damaged DNA. This chain is DNA ligase, found in Renibacterium salmoninarum (strain ATCC 33209 / DSM 20767 / JCM 11484 / NBRC 15589 / NCIMB 2235).